The sequence spans 403 residues: Tubby-like F-box protein 6 (403 aa).

One can recognise an F-box domain in the interval 50 to 105 (SCWAQLPPELLREVLVRIEESEVWWPSRRDVVACAGVCRSWRGITKEIVRVPEASG).

This sequence belongs to the TUB family. In terms of tissue distribution, ubiquitous.

The polypeptide is Tubby-like F-box protein 6 (TULP6) (Oryza sativa subsp. japonica (Rice)).